Reading from the N-terminus, the 331-residue chain is Lipoyl synthase (331 aa).

[4Fe-4S] cluster-binding residues include Cys57, Cys62, Cys68, Cys83, Cys87, Cys90, and Ser294. Residues Trp69–Leu283 enclose the Radical SAM core domain.

It belongs to the radical SAM superfamily. Lipoyl synthase family. It depends on [4Fe-4S] cluster as a cofactor.

Its subcellular location is the cytoplasm. It carries out the reaction [[Fe-S] cluster scaffold protein carrying a second [4Fe-4S](2+) cluster] + N(6)-octanoyl-L-lysyl-[protein] + 2 oxidized [2Fe-2S]-[ferredoxin] + 2 S-adenosyl-L-methionine + 4 H(+) = [[Fe-S] cluster scaffold protein] + N(6)-[(R)-dihydrolipoyl]-L-lysyl-[protein] + 4 Fe(3+) + 2 hydrogen sulfide + 2 5'-deoxyadenosine + 2 L-methionine + 2 reduced [2Fe-2S]-[ferredoxin]. It functions in the pathway protein modification; protein lipoylation via endogenous pathway; protein N(6)-(lipoyl)lysine from octanoyl-[acyl-carrier-protein]: step 2/2. Catalyzes the radical-mediated insertion of two sulfur atoms into the C-6 and C-8 positions of the octanoyl moiety bound to the lipoyl domains of lipoate-dependent enzymes, thereby converting the octanoylated domains into lipoylated derivatives. The chain is Lipoyl synthase from Clavibacter michiganensis subsp. michiganensis (strain NCPPB 382).